A 216-amino-acid chain; its full sequence is NKG2-D type II integral membrane protein (216 aa).

The Cytoplasmic portion of the chain corresponds to 1 to 51 (MGWIRGRRSRHSWEMSEFHNYNLDLKKSDFSTRWQKQRCPVVKSKCRENAS). The chain crosses the membrane as a helical; Signal-anchor for type II membrane protein span at residues 52–72 (PFFFCCFIAVAMGIRFIIMVT). The Extracellular portion of the chain corresponds to 73–216 (IWSAVFLNSL…NTYICMQRTV (144 aa)). Disulfide bonds link C96–C105, C99–C110, C127–C211, and C189–C203. One can recognise a C-type lectin domain in the interval 98–213 (PCPKNWICYK…STPNTYICMQ (116 aa)). 3 N-linked (GlcNAc...) asparagine glycosylation sites follow: N131, N163, and N202.

Homodimer; disulfide-linked. Heterohexamer composed of two subunits of KLRK1 and four subunits of HCST/DAP10. Interacts (via transmembrane domain) with HCST/DAP10 (via transmembrane domain); the interaction is required for KLRK1 NK cell surface and induces NK cell-mediated cytotoxicity. Does not interact with TYROBP. Interacts with CEACAM1; recruits PTPN6 that dephosphorylates VAV1. As to expression, expressed in natural killer (NK) cells, CD8(+) alpha-beta and gamma-delta T-cells. Expressed on essentially all CD56+CD3- NK cells from freshly isolated PBMC. Expressed in interferon-producing killer dendritic cells (IKDCs).

The protein localises to the cell membrane. Functionally, functions as an activating and costimulatory receptor involved in immunosurveillance upon binding to various cellular stress-inducible ligands displayed at the surface of autologous tumor cells and virus-infected cells. Provides both stimulatory and costimulatory innate immune responses on activated killer (NK) cells, leading to cytotoxic activity. Acts as a costimulatory receptor for T-cell receptor (TCR) in CD8(+) T-cell-mediated adaptive immune responses by amplifying T-cell activation. Stimulates perforin-mediated elimination of ligand-expressing tumor cells. Signaling involves calcium influx, culminating in the expression of TNF-alpha. Participates in NK cell-mediated bone marrow graft rejection. May play a regulatory role in differentiation and survival of NK cells. Binds to ligands belonging to various subfamilies of MHC class I-related glycoproteins including MICA, MICB, RAET1E, RAET1G, RAET1L/ULBP6, ULBP1, ULBP2, ULBP3 (ULBP2&gt;ULBP1&gt;ULBP3) and ULBP4. This is NKG2-D type II integral membrane protein (KLRK1) from Homo sapiens (Human).